Reading from the N-terminus, the 251-residue chain is Imidazole glycerol phosphate synthase subunit HisF (251 aa).

Residues Asp-11 and Asp-130 contribute to the active site.

This sequence belongs to the HisA/HisF family. As to quaternary structure, heterodimer of HisH and HisF.

It is found in the cytoplasm. The catalysed reaction is 5-[(5-phospho-1-deoxy-D-ribulos-1-ylimino)methylamino]-1-(5-phospho-beta-D-ribosyl)imidazole-4-carboxamide + L-glutamine = D-erythro-1-(imidazol-4-yl)glycerol 3-phosphate + 5-amino-1-(5-phospho-beta-D-ribosyl)imidazole-4-carboxamide + L-glutamate + H(+). Its pathway is amino-acid biosynthesis; L-histidine biosynthesis; L-histidine from 5-phospho-alpha-D-ribose 1-diphosphate: step 5/9. In terms of biological role, IGPS catalyzes the conversion of PRFAR and glutamine to IGP, AICAR and glutamate. The HisF subunit catalyzes the cyclization activity that produces IGP and AICAR from PRFAR using the ammonia provided by the HisH subunit. This chain is Imidazole glycerol phosphate synthase subunit HisF, found in Bacteroides thetaiotaomicron (strain ATCC 29148 / DSM 2079 / JCM 5827 / CCUG 10774 / NCTC 10582 / VPI-5482 / E50).